We begin with the raw amino-acid sequence, 237 residues long: Deoxyribose-phosphate aldolase (237 aa).

The active-site Proton donor/acceptor is Asp94. Residue Lys158 is the Schiff-base intermediate with acetaldehyde of the active site. Lys187 serves as the catalytic Proton donor/acceptor.

The protein belongs to the DeoC/FbaB aldolase family. DeoC type 1 subfamily.

Its subcellular location is the cytoplasm. It carries out the reaction 2-deoxy-D-ribose 5-phosphate = D-glyceraldehyde 3-phosphate + acetaldehyde. Its pathway is carbohydrate degradation; 2-deoxy-D-ribose 1-phosphate degradation; D-glyceraldehyde 3-phosphate and acetaldehyde from 2-deoxy-alpha-D-ribose 1-phosphate: step 2/2. Functionally, catalyzes a reversible aldol reaction between acetaldehyde and D-glyceraldehyde 3-phosphate to generate 2-deoxy-D-ribose 5-phosphate. In Lactobacillus acidophilus (strain ATCC 700396 / NCK56 / N2 / NCFM), this protein is Deoxyribose-phosphate aldolase.